Reading from the N-terminus, the 258-residue chain is Protein T1 (258 aa).

The signal sequence occupies residues 1 to 17 (MRRLCIILLVYVYATFA). N-linked (GlcNAc...) asparagine; by host glycans are attached at residues asparagine 67, asparagine 151, and asparagine 172.

Belongs to the poxviruses A41 family.

The chain is Protein T1 from Rabbit fibroma virus (strain Kasza) (RFV).